The chain runs to 608 residues: RAS guanyl-releasing protein 2 (608 aa).

The N-terminal Ras-GEF domain occupies 4–126; sequence TLDLDKGCTV…SLIDIESVPT (123 aa). 3 positions are modified to phosphoserine: serine 116, serine 117, and serine 147. The region spanning 154–387 is the Ras-GEF domain; the sequence is EPMELAEHLT…YQLSLQREPR (234 aa). Positions 382 to 405 are disordered; the sequence is LQREPRSKSSPTSPTSCTPPPRPP. 2 consecutive EF-hand domains span residues 426 to 461 and 463 to 490; these read HIEKMVESVFRNFDVDGDGHISQEEFQIIRGNFPYL and AFGDLDQNQDGCISREEMISYFLRSSSV. Ca(2+) contacts are provided by aspartate 439, aspartate 441, aspartate 443, histidine 445, glutamate 450, aspartate 468, asparagine 470, aspartate 472, cysteine 474, and glutamate 479. A Phorbol-ester/DAG-type zinc finger spans residues 498 to 548; sequence VHNFQESNSLRPVACRHCKALILGIYKQGLKCRACGVNCHKQCKERLSVEC. A phosphoserine mark is found at serine 554 and serine 575. A disordered region spans residues 555–596; it reads VSLEGSAPSPSPTHTHHRAFSFSLPRPGRRSSRPPEIREEEV.

It belongs to the RASGRP family. Forms a signaling complex with RAP1 and BRAF. Interacts with F-actin. Interacts with RAP1. Detected in megakaryocytes, platelet and neutrophils but not in lymphocytes (at protein level). Isoform 1 and isoform 3 are detected in brain basal glanglia, heart, lung, spleen, liver and kidney interstitial cells.

It is found in the cytoplasm. It localises to the cytosol. Its subcellular location is the cell membrane. The protein resides in the synapse. The protein localises to the synaptosome. It is found in the cell projection. It localises to the ruffle membrane. In terms of biological role, functions as a calcium- and DAG-regulated nucleotide exchange factor specifically activating Rap through the exchange of bound GDP for GTP. May also activate other GTPases such as RRAS, RRAS2, NRAS, KRAS but not HRAS. Functions in aggregation of platelets and adhesion of T-lymphocytes and neutrophils probably through inside-out integrin activation. May function in the muscarinic acetylcholine receptor M1/CHRM1 signaling pathway. The protein is RAS guanyl-releasing protein 2 (Rasgrp2) of Mus musculus (Mouse).